A 91-amino-acid chain; its full sequence is DNA-directed RNA polymerase subunit omega (91 aa).

The protein belongs to the RNA polymerase subunit omega family. The RNAP catalytic core consists of 2 alpha, 1 beta, 1 beta' and 1 omega subunit. When a sigma factor is associated with the core the holoenzyme is formed, which can initiate transcription.

It carries out the reaction RNA(n) + a ribonucleoside 5'-triphosphate = RNA(n+1) + diphosphate. Functionally, promotes RNA polymerase assembly. Latches the N- and C-terminal regions of the beta' subunit thereby facilitating its interaction with the beta and alpha subunits. This Psychromonas ingrahamii (strain DSM 17664 / CCUG 51855 / 37) protein is DNA-directed RNA polymerase subunit omega.